A 646-amino-acid chain; its full sequence is uncharacterized protein (646 aa).

The next 10 membrane-spanning stretches (helical) occupy residues 20-40, 54-74, 115-135, 154-174, 203-223, 232-252, 285-305, 523-543, 582-602, and 613-633; these read AYFL…SFIF, LVKT…IFFI, LAAI…FFMI, AFVM…ILSL, TVLS…ANAI, ILIL…VAFF, LFLT…IYMF, GVAL…IVQG, IGFL…FAYA, and FLEA…YYIV.

Belongs to the ABC-4 integral membrane protein family.

It is found in the cell membrane. This is an uncharacterized protein from Bacillus subtilis (strain 168).